A 126-amino-acid chain; its full sequence is MRHKNSGKKLNRTPSHRKALFRNMANELIKHGKICTTETKAKELRRIVEPLITLALRNDLHSRRLAFQSMGDHQLVKHLFNNVAPAFVNVPGGYTRITRLALRRKGDCAPMAMIEFTCQKIDEKSI.

It belongs to the bacterial ribosomal protein bL17 family. As to quaternary structure, part of the 50S ribosomal subunit. Contacts protein L32.

In Lawsonia intracellularis (strain PHE/MN1-00), this protein is Large ribosomal subunit protein bL17.